The following is a 497-amino-acid chain: Guanosine-5'-triphosphate,3'-diphosphate pyrophosphatase (497 aa).

This sequence belongs to the GppA/Ppx family. GppA subfamily.

It catalyses the reaction guanosine 3'-diphosphate 5'-triphosphate + H2O = guanosine 3',5'-bis(diphosphate) + phosphate + H(+). Its pathway is purine metabolism; ppGpp biosynthesis; ppGpp from GTP: step 2/2. Catalyzes the conversion of pppGpp to ppGpp. Guanosine pentaphosphate (pppGpp) is a cytoplasmic signaling molecule which together with ppGpp controls the 'stringent response', an adaptive process that allows bacteria to respond to amino acid starvation, resulting in the coordinated regulation of numerous cellular activities. The chain is Guanosine-5'-triphosphate,3'-diphosphate pyrophosphatase from Vibrio campbellii (strain ATCC BAA-1116).